The sequence spans 1551 residues: Pentafunctional AROM polypeptide (1551 aa).

The tract at residues 1–379 (MSIEKVPILG…YQLKAHQVSK (379 aa)) is 3-dehydroquinate synthase. Residues 42 to 44 (DTN), 80 to 83 (ENNK), 111 to 113 (GGV), and aspartate 116 contribute to the NAD(+) site. Arginine 127 provides a ligand contact to 7-phospho-2-dehydro-3-deoxy-D-arabino-heptonate. 136–137 (TT) contributes to the NAD(+) binding site. Residues aspartate 143 and lysine 149 each coordinate 7-phospho-2-dehydro-3-deoxy-D-arabino-heptonate. Residue lysine 158 coordinates NAD(+). Asparagine 159 contacts 7-phospho-2-dehydro-3-deoxy-D-arabino-heptonate. NAD(+) is bound by residues 176–179 (FLET) and asparagine 187. Glutamate 191 lines the Zn(2+) pocket. Residues 191-194 (EVVK) and lysine 243 contribute to the 7-phospho-2-dehydro-3-deoxy-D-arabino-heptonate site. The active-site Proton acceptor; for 3-dehydroquinate synthase activity is glutamate 253. Residues 257 to 261 (RNLLN) and histidine 264 each bind 7-phospho-2-dehydro-3-deoxy-D-arabino-heptonate. Histidine 264 lines the Zn(2+) pocket. Catalysis depends on histidine 268, which acts as the Proton acceptor; for 3-dehydroquinate synthase activity. Histidine 280 and lysine 351 together coordinate 7-phospho-2-dehydro-3-deoxy-D-arabino-heptonate. Position 280 (histidine 280) interacts with Zn(2+). Residues 392 to 838 (VHPFTNPPKE…WDILHSKFKI (447 aa)) are EPSP synthase. Residues 858 to 1048 (DKSIIVIGMR…VPAGRSAAVV (191 aa)) form a shikimate kinase region. Residue 865–872 (GMRGTGKS) participates in ATP binding. Residues 1049 to 1258 (LTSPDLNEVV…NDEEFLTIGE (210 aa)) form a 3-dehydroquinase region. The active-site Schiff-base intermediate with substrate; for 3-dehydroquinate dehydratase activity is the arginine 1194. The segment at 1271–1551 (AKKFWVIGSP…EIIHRAVVEE (281 aa)) is shikimate dehydrogenase.

The protein in the N-terminal section; belongs to the sugar phosphate cyclases superfamily. Dehydroquinate synthase family. It in the 2nd section; belongs to the EPSP synthase family. In the 3rd section; belongs to the shikimate kinase family. This sequence in the 4th section; belongs to the type-I 3-dehydroquinase family. The protein in the C-terminal section; belongs to the shikimate dehydrogenase family. As to quaternary structure, homodimer. Zn(2+) is required as a cofactor.

It localises to the cytoplasm. It carries out the reaction 7-phospho-2-dehydro-3-deoxy-D-arabino-heptonate = 3-dehydroquinate + phosphate. The enzyme catalyses 3-dehydroquinate = 3-dehydroshikimate + H2O. It catalyses the reaction shikimate + NADP(+) = 3-dehydroshikimate + NADPH + H(+). The catalysed reaction is shikimate + ATP = 3-phosphoshikimate + ADP + H(+). It carries out the reaction 3-phosphoshikimate + phosphoenolpyruvate = 5-O-(1-carboxyvinyl)-3-phosphoshikimate + phosphate. The protein operates within metabolic intermediate biosynthesis; chorismate biosynthesis; chorismate from D-erythrose 4-phosphate and phosphoenolpyruvate: step 2/7. It participates in metabolic intermediate biosynthesis; chorismate biosynthesis; chorismate from D-erythrose 4-phosphate and phosphoenolpyruvate: step 3/7. Its pathway is metabolic intermediate biosynthesis; chorismate biosynthesis; chorismate from D-erythrose 4-phosphate and phosphoenolpyruvate: step 4/7. It functions in the pathway metabolic intermediate biosynthesis; chorismate biosynthesis; chorismate from D-erythrose 4-phosphate and phosphoenolpyruvate: step 5/7. The protein operates within metabolic intermediate biosynthesis; chorismate biosynthesis; chorismate from D-erythrose 4-phosphate and phosphoenolpyruvate: step 6/7. Its function is as follows. The AROM polypeptide catalyzes 5 consecutive enzymatic reactions in prechorismate polyaromatic amino acid biosynthesis. The polypeptide is Pentafunctional AROM polypeptide (Candida albicans (strain SC5314 / ATCC MYA-2876) (Yeast)).